Consider the following 369-residue polypeptide: Anhydro-N-acetylmuramic acid kinase (369 aa).

12–19 (GTSLDGVD) is a binding site for ATP.

Belongs to the anhydro-N-acetylmuramic acid kinase family.

It carries out the reaction 1,6-anhydro-N-acetyl-beta-muramate + ATP + H2O = N-acetyl-D-muramate 6-phosphate + ADP + H(+). It participates in amino-sugar metabolism; 1,6-anhydro-N-acetylmuramate degradation. The protein operates within cell wall biogenesis; peptidoglycan recycling. Catalyzes the specific phosphorylation of 1,6-anhydro-N-acetylmuramic acid (anhMurNAc) with the simultaneous cleavage of the 1,6-anhydro ring, generating MurNAc-6-P. Is required for the utilization of anhMurNAc either imported from the medium or derived from its own cell wall murein, and thus plays a role in cell wall recycling. The protein is Anhydro-N-acetylmuramic acid kinase of Escherichia coli (strain SE11).